The sequence spans 526 residues: Type 2 glycosyltransferase (526 aa).

A helical membrane pass occupies residues 25–45 (PSFDFWYSSTFWLYLFLGLWF). 2 N-linked (GlcNAc...) asparagine glycosylation sites follow: asparagine 298 and asparagine 317. A run of 3 helical transmembrane segments spans residues 340 to 360 (FATF…SCWW), 375 to 395 (WSQF…GLFI), and 403 to 423 (FLPV…YALI). Residues asparagine 426 and asparagine 517 are each glycosylated (N-linked (GlcNAc...) asparagine).

This sequence belongs to the GT2 glycosyltransferase family.

Its subcellular location is the cell membrane. It localises to the secreted. The protein resides in the cell wall. Its function is as follows. Glycosyltransferase involved in the maintenance of the outermost surface of the fungal cell wall. Likely functions in the synthesis of a currently unknown, potentially minor but widespread, extracellular or outer cell wall polysaccharide which plays a key role in facilitating many interactions between plants and fungi by enabling hyphal growth on solid matrices. The polypeptide is Type 2 glycosyltransferase (Gibberella zeae (strain ATCC MYA-4620 / CBS 123657 / FGSC 9075 / NRRL 31084 / PH-1) (Wheat head blight fungus)).